A 104-amino-acid chain; its full sequence is Seminal ribonuclease (104 aa).

4 disulfide bridges follow: Cys12–Cys70, Cys26–Cys81, Cys44–Cys96, and Cys51–Cys58. Residues 27-31 (KPVNT), Lys52, and Arg71 each bind substrate.

This sequence belongs to the pancreatic ribonuclease family. As to quaternary structure, homodimer; disulfide-linked.

It localises to the secreted. It carries out the reaction an [RNA] containing cytidine + H2O = an [RNA]-3'-cytidine-3'-phosphate + a 5'-hydroxy-ribonucleotide-3'-[RNA].. The enzyme catalyses an [RNA] containing uridine + H2O = an [RNA]-3'-uridine-3'-phosphate + a 5'-hydroxy-ribonucleotide-3'-[RNA].. This Saiga tatarica (Saiga antelope) protein is Seminal ribonuclease (SRN).